Here is a 406-residue protein sequence, read N- to C-terminus: Digeranylgeranylglycerophospholipid reductase 2 (406 aa).

FAD contacts are provided by glycine 15, glutamate 34, cysteine 45, alanine 46, glycine 48, arginine 99, alanine 123, aspartate 279, glycine 291, and isoleucine 292.

Belongs to the geranylgeranyl reductase family. DGGGPL reductase subfamily. FAD serves as cofactor.

It carries out the reaction a 2,3-bis-O-phytanyl-sn-glycerol 1-phospholipid + 8 oxidized 2[4Fe-4S]-[ferredoxin] = a 2,3-bis-O-(geranylgeranyl)-sn-glycerol 1-phospholipid + 8 reduced 2[4Fe-4S]-[ferredoxin] + 16 H(+). The enzyme catalyses 2,3-bis-O-(phytanyl)-sn-glycerol 1-phosphate + 8 oxidized 2[4Fe-4S]-[ferredoxin] = 2,3-bis-O-(geranylgeranyl)-sn-glycerol 1-phosphate + 8 reduced 2[4Fe-4S]-[ferredoxin] + 16 H(+). The catalysed reaction is a 2,3-bis-O-phytanyl-sn-glycerol 1-phospholipid + 8 A = a 2,3-bis-O-(geranylgeranyl)-sn-glycerol 1-phospholipid + 8 AH2. It catalyses the reaction CDP-2,3-bis-O-(geranylgeranyl)-sn-glycerol + 8 AH2 = CDP-2,3-bis-O-(phytanyl)-sn-glycerol + 8 A. It carries out the reaction archaetidylserine + 8 AH2 = 2,3-bis-O-phytanyl-sn-glycero-3-phospho-L-serine + 8 A. It participates in membrane lipid metabolism; glycerophospholipid metabolism. Functionally, is involved in the reduction of 2,3-digeranylgeranylglycerophospholipids (unsaturated archaeols) into 2,3-diphytanylglycerophospholipids (saturated archaeols) in the biosynthesis of archaeal membrane lipids. Catalyzes the formation of archaetidic acid (2,3-di-O-phytanyl-sn-glyceryl phosphate) from 2,3-di-O-geranylgeranylglyceryl phosphate (DGGGP) via the hydrogenation of each double bond of the isoprenoid chains. Is also probably able to reduce double bonds of geranyl groups in CDP-2,3-bis-O-(geranylgeranyl)-sn-glycerol and archaetidylserine, thus acting at various stages in the biosynthesis of archaeal membrane lipids. This chain is Digeranylgeranylglycerophospholipid reductase 2, found in Methanococcoides burtonii (strain DSM 6242 / NBRC 107633 / OCM 468 / ACE-M).